The chain runs to 708 residues: Exocyst complex component 5 (708 aa).

Ala2 is subject to N-acetylalanine. A coiled-coil region spans residues 40 to 101 (KRLLEEFVNH…AFQHFQELDE (62 aa)). Residues Thr122, Thr395, and Thr405 each carry the phosphothreonine modification. At Ser412 the chain carries Phosphoserine.

Belongs to the SEC10 family. The exocyst complex is composed of EXOC1, EXOC2, EXOC3, EXOC4, EXOC5, EXOC6, EXOC7 and EXOC8. Interacts with EXOC3L1. In terms of tissue distribution, ubiquitous.

The protein localises to the cytoplasm. It localises to the midbody. Functionally, component of the exocyst complex involved in the docking of exocytic vesicles with fusion sites on the plasma membrane. The polypeptide is Exocyst complex component 5 (Exoc5) (Rattus norvegicus (Rat)).